Here is a 293-residue protein sequence, read N- to C-terminus: MAMRQCAIYGKGGIGKSTTTQNLVAALAELGKKVMIVGCDPKADSTRLILHSKAQNTIMEMAAEAGTVEDLELEDVLKTGYGDIKCVESGGPEPGVGCAGRGVITAINFLEEEGAYEDDLDFVFYDVLGDVVCGGFAMPIRENKAQEIYVVCSGEMMAMYAANNICKGIVKYANSGSVRLGGLICNSRNTDREDELIMALADKLGSQMIHFVPRDNVVQRAEIRRMTVIEYDPAAKQADEYRTLAKKIVENKKLVIPTPISMDELEALLMEFGIMDEEDMTIVGKTAAEEVVA.

An ATP-binding site is contributed by 10 to 17; it reads GKGGIGKS. Residue cysteine 98 coordinates [4Fe-4S] cluster. Arginine 101 carries the post-translational modification ADP-ribosylarginine; by dinitrogenase reductase ADP-ribosyltransferase. A [4Fe-4S] cluster-binding site is contributed by cysteine 133.

The protein belongs to the NifH/BchL/ChlL family. Homodimer. It depends on [4Fe-4S] cluster as a cofactor. The reversible ADP-ribosylation of Arg-101 inactivates the nitrogenase reductase and regulates nitrogenase activity.

It carries out the reaction N2 + 8 reduced [2Fe-2S]-[ferredoxin] + 16 ATP + 16 H2O = H2 + 8 oxidized [2Fe-2S]-[ferredoxin] + 2 NH4(+) + 16 ADP + 16 phosphate + 6 H(+). Its function is as follows. The key enzymatic reactions in nitrogen fixation are catalyzed by the nitrogenase complex, which has 2 components: the iron protein and the molybdenum-iron protein. This Stutzerimonas stutzeri (strain A1501) (Pseudomonas stutzeri) protein is Nitrogenase iron protein.